The following is a 236-amino-acid chain: Small ribosomal subunit protein uS2c (236 aa).

This sequence belongs to the universal ribosomal protein uS2 family.

The protein resides in the plastid. It localises to the chloroplast. This Pisum sativum (Garden pea) protein is Small ribosomal subunit protein uS2c (rps2).